An 843-amino-acid chain; its full sequence is Protein translocase subunit SecA (843 aa).

ATP contacts are provided by residues Gln91, 109–113, and Asp498; that span reads GEGKT. Residues 796-825 show a composition bias toward basic and acidic residues; it reads DFGKAEHVSAEDGKEKAKAEPYVKDEHIGR. The tract at residues 796–833 is disordered; that stretch reads DFGKAEHVSAEDGKEKAKAEPYVKDEHIGRNDPCPCGS. The Zn(2+) site is built by Cys829, Cys831, Cys840, and His841.

The protein belongs to the SecA family. Monomer and homodimer. Part of the essential Sec protein translocation apparatus which comprises SecA, SecYEG and auxiliary proteins SecDF. Other proteins may also be involved. Zn(2+) serves as cofactor.

It localises to the cell membrane. The protein localises to the cytoplasm. The enzyme catalyses ATP + H2O + cellular proteinSide 1 = ADP + phosphate + cellular proteinSide 2.. Functionally, part of the Sec protein translocase complex. Interacts with the SecYEG preprotein conducting channel. Has a central role in coupling the hydrolysis of ATP to the transfer of proteins into and across the cell membrane, serving as an ATP-driven molecular motor driving the stepwise translocation of polypeptide chains across the membrane. The polypeptide is Protein translocase subunit SecA (Staphylococcus saprophyticus subsp. saprophyticus (strain ATCC 15305 / DSM 20229 / NCIMB 8711 / NCTC 7292 / S-41)).